The chain runs to 155 residues: Interleukin-2 (155 aa).

A signal peptide spans 1–20; sequence MYKIQLLSCIALTLALVANG. A glycan (O-linked (GalNAc...) threonine) is linked at Thr23. The cysteines at positions 79 and 127 are disulfide-linked.

This sequence belongs to the IL-2 family.

The protein localises to the secreted. Cytokine produced by activated CD4-positive helper T-cells and to a lesser extend activated CD8-positive T-cells and natural killer (NK) cells that plays pivotal roles in the immune response and tolerance. Binds to a receptor complex composed of either the high-affinity trimeric IL-2R (IL2RA/CD25, IL2RB/CD122 and IL2RG/CD132) or the low-affinity dimeric IL-2R (IL2RB and IL2RG). Interaction with the receptor leads to oligomerization and conformation changes in the IL-2R subunits resulting in downstream signaling starting with phosphorylation of JAK1 and JAK3. In turn, JAK1 and JAK3 phosphorylate the receptor to form a docking site leading to the phosphorylation of several substrates including STAT5. This process leads to activation of several pathways including STAT, phosphoinositide-3-kinase/PI3K and mitogen-activated protein kinase/MAPK pathways. Functions as a T-cell growth factor and can increase NK-cell cytolytic activity as well. Promotes strong proliferation of activated B-cells and subsequently immunoglobulin production. Plays a pivotal role in regulating the adaptive immune system by controlling the survival and proliferation of regulatory T-cells, which are required for the maintenance of immune tolerance. Moreover, participates in the differentiation and homeostasis of effector T-cell subsets, including Th1, Th2, Th17 as well as memory CD8-positive T-cells. In Boselaphus tragocamelus (Nilgai), this protein is Interleukin-2 (IL2).